The following is a 157-amino-acid chain: Transcription antitermination protein NusB (157 aa).

Belongs to the NusB family.

Its function is as follows. Involved in transcription antitermination. Required for transcription of ribosomal RNA (rRNA) genes. Binds specifically to the boxA antiterminator sequence of the ribosomal RNA (rrn) operons. The chain is Transcription antitermination protein NusB from Xylella fastidiosa (strain M12).